We begin with the raw amino-acid sequence, 506 residues long: NAD(P)H-quinone oxidoreductase subunit 2 (506 aa).

13 helical membrane passes run 14–34 (AIIPEAFILLGIVGTLLVDLA), 42–62 (WAPIICYLSIGSSLFSLALQW), 79–99 (LAIAFRAIIALSTLVSLLISW), 108–128 (PIGEFAAIVLSATLGAMLLCG), 132–152 (LISIFISLETLSVASYLLSGY), 167–187 (LLVGSAAAAVYLYGSSFLYGL), 206–226 (FITSLALVFVLSTVAFKIAAV), 240–260 (PTPVVAFLSVGSKTAGFAFAI), 276–296 (LLFTILAILSMALGNVVALAQ), 302–322 (MLAYSSIGQAGFVMIGIVSGT), 330–350 (VLYLAAYLFMNLGAFSCVILF), 374–394 (LGLSLCLLSLGGLPPMLGFFG), and 409–429 (LLVIIGLVTSVISIYYYISVI).

It belongs to the complex I subunit 2 family. As to quaternary structure, NDH-1 can be composed of about 15 different subunits; different subcomplexes with different compositions have been identified which probably have different functions.

The protein localises to the cellular thylakoid membrane. It catalyses the reaction a plastoquinone + NADH + (n+1) H(+)(in) = a plastoquinol + NAD(+) + n H(+)(out). The enzyme catalyses a plastoquinone + NADPH + (n+1) H(+)(in) = a plastoquinol + NADP(+) + n H(+)(out). In terms of biological role, NDH-1 shuttles electrons from an unknown electron donor, via FMN and iron-sulfur (Fe-S) centers, to quinones in the respiratory and/or the photosynthetic chain. The immediate electron acceptor for the enzyme in this species is believed to be plastoquinone. Couples the redox reaction to proton translocation, and thus conserves the redox energy in a proton gradient. Cyanobacterial NDH-1 also plays a role in inorganic carbon-concentration. The protein is NAD(P)H-quinone oxidoreductase subunit 2 of Prochlorococcus marinus (strain MIT 9312).